A 75-amino-acid chain; its full sequence is Conotoxin VnMSGL-0111 (75 aa).

A signal peptide spans 1–20 (MSGLEIMVLTLLLLVSMATS). The propeptide occupies 21 to 44 (HQDGGEKQATQRDAINVRRRSITR). 3 cysteine pairs are disulfide-bonded: Cys48/Cys60, Cys52/Cys69, and Cys59/Cys73.

Belongs to the conotoxin O3 superfamily. In terms of tissue distribution, expressed by the venom duct.

The protein localises to the secreted. This chain is Conotoxin VnMSGL-0111, found in Conus ventricosus (Mediterranean cone).